The sequence spans 341 residues: Hygromycin-B 4-O-kinase (341 aa).

Asp198 (proton acceptor) is an active-site residue.

This sequence belongs to the aminoglycoside phosphotransferase family.

The catalysed reaction is hygromycin B + ATP = 4-O-phosphohygromycin B + ADP + H(+). Its function is as follows. The aminoglycoside phosphotransferases achieve inactivation of their antibiotic substrates by phosphorylation. Only phosphorylates hygromycin and closely related compounds such as demethyl analogs and destomycin. This Escherichia coli protein is Hygromycin-B 4-O-kinase (hph).